The sequence spans 353 residues: Tetraacyldisaccharide 4'-kinase (353 aa).

ATP is bound at residue Thr66–Thr73.

This sequence belongs to the LpxK family.

The enzyme catalyses a lipid A disaccharide + ATP = a lipid IVA + ADP + H(+). It functions in the pathway glycolipid biosynthesis; lipid IV(A) biosynthesis; lipid IV(A) from (3R)-3-hydroxytetradecanoyl-[acyl-carrier-protein] and UDP-N-acetyl-alpha-D-glucosamine: step 6/6. Transfers the gamma-phosphate of ATP to the 4'-position of a tetraacyldisaccharide 1-phosphate intermediate (termed DS-1-P) to form tetraacyldisaccharide 1,4'-bis-phosphate (lipid IVA). This is Tetraacyldisaccharide 4'-kinase from Geobacter sulfurreducens (strain ATCC 51573 / DSM 12127 / PCA).